The following is a 460-amino-acid chain: V-type ATP synthase beta chain (460 aa).

Belongs to the ATPase alpha/beta chains family.

In terms of biological role, produces ATP from ADP in the presence of a proton gradient across the membrane. The V-type beta chain is a regulatory subunit. The polypeptide is V-type ATP synthase beta chain (Dictyoglomus turgidum (strain DSM 6724 / Z-1310)).